A 338-amino-acid chain; its full sequence is RNA 3'-terminal phosphate cyclase (338 aa).

ATP contacts are provided by residues Gln-103 and 283-287; that span reads YLADQ. The Tele-AMP-histidine intermediate role is filled by His-308.

Belongs to the RNA 3'-terminal cyclase family. Type 1 subfamily.

It is found in the cytoplasm. It carries out the reaction a 3'-end 3'-phospho-ribonucleotide-RNA + ATP = a 3'-end 2',3'-cyclophospho-ribonucleotide-RNA + AMP + diphosphate. Its function is as follows. Catalyzes the conversion of 3'-phosphate to a 2',3'-cyclic phosphodiester at the end of RNA. The mechanism of action of the enzyme occurs in 3 steps: (A) adenylation of the enzyme by ATP; (B) transfer of adenylate to an RNA-N3'P to produce RNA-N3'PP5'A; (C) and attack of the adjacent 2'-hydroxyl on the 3'-phosphorus in the diester linkage to produce the cyclic end product. The biological role of this enzyme is unknown but it is likely to function in some aspects of cellular RNA processing. The protein is RNA 3'-terminal phosphate cyclase of Escherichia coli (strain SMS-3-5 / SECEC).